Consider the following 121-residue polypeptide: Large ribosomal subunit protein uL24 (121 aa).

The protein belongs to the universal ribosomal protein uL24 family. Part of the 50S ribosomal subunit.

Its function is as follows. One of two assembly initiator proteins, it binds directly to the 5'-end of the 23S rRNA, where it nucleates assembly of the 50S subunit. Functionally, located at the polypeptide exit tunnel on the outside of the subunit. The polypeptide is Large ribosomal subunit protein uL24 (Pyrococcus horikoshii (strain ATCC 700860 / DSM 12428 / JCM 9974 / NBRC 100139 / OT-3)).